Reading from the N-terminus, the 157-residue chain is Protein Smg homolog (157 aa).

Belongs to the Smg family.

This chain is Protein Smg homolog, found in Aliivibrio fischeri (strain MJ11) (Vibrio fischeri).